We begin with the raw amino-acid sequence, 247 residues long: Cell division protein ZapD (247 aa).

It belongs to the ZapD family. In terms of assembly, interacts with FtsZ.

It localises to the cytoplasm. Its function is as follows. Cell division factor that enhances FtsZ-ring assembly. Directly interacts with FtsZ and promotes bundling of FtsZ protofilaments, with a reduction in FtsZ GTPase activity. This Enterobacter sp. (strain 638) protein is Cell division protein ZapD.